The primary structure comprises 377 residues: N5-carboxyaminoimidazole ribonucleotide synthase (377 aa).

ATP contacts are provided by residues arginine 93, lysine 133, 138–144 (GYDGKGQ), 175–178 (EEFV), glutamate 183, histidine 206, and 257–258 (NE). An ATP-grasp domain is found at 97 to 287 (KALLDHAGVR…QFENHLRAVC (191 aa)).

The protein belongs to the PurK/PurT family. As to quaternary structure, homodimer.

It carries out the reaction 5-amino-1-(5-phospho-beta-D-ribosyl)imidazole + hydrogencarbonate + ATP = 5-carboxyamino-1-(5-phospho-D-ribosyl)imidazole + ADP + phosphate + 2 H(+). The protein operates within purine metabolism; IMP biosynthesis via de novo pathway; 5-amino-1-(5-phospho-D-ribosyl)imidazole-4-carboxylate from 5-amino-1-(5-phospho-D-ribosyl)imidazole (N5-CAIR route): step 1/2. Its function is as follows. Catalyzes the ATP-dependent conversion of 5-aminoimidazole ribonucleotide (AIR) and HCO(3)(-) to N5-carboxyaminoimidazole ribonucleotide (N5-CAIR). This Vibrio vulnificus (strain CMCP6) protein is N5-carboxyaminoimidazole ribonucleotide synthase.